A 248-amino-acid chain; its full sequence is mRNA-decapping protein OPG122 (248 aa).

The Nudix hydrolase domain maps to 45–227 (HKRVSVSAIL…IAKYALDTAK (183 aa)). The short motif at 125–147 (GGILKRGENVPECLSREIKEEVN) is the Nudix box element. E132 is a binding site for Mg(2+). E141 functions as the Nucleophile in the catalytic mechanism. E145 lines the Mn(2+) pocket. D167 serves as a coordination point for Mg(2+).

This sequence belongs to the Nudix hydrolase family. The cofactor is Mg(2+). Mn(2+) serves as cofactor.

The protein localises to the host mitochondrion. Decapping enzyme that remove the protective 5'-cap from both host and viral mRNAs to commit transcripts for decay by the cellular exonuclease XRN1. Preferentially targets spliced mRNAs and since all viral genes are intronless, it preferentially targets host over viral transcripts. Acceleration of the turnover of cellular transcripts promotes the shutoff of host protein synthesis and therefore diminish the magnitude of antiviral response. The protein is mRNA-decapping protein OPG122 (OPG122) of Variola virus (isolate Human/India/Ind3/1967) (VARV).